The primary structure comprises 490 residues: GTPase Der (490 aa).

EngA-type G domains follow at residues 3 to 166 and 196 to 369; these read PVIA…PRDE and IKIA…KSAV. GTP contacts are provided by residues 9-16, 56-60, 118-121, 202-209, 249-253, and 314-317; these read GRPNVGKS, DTGGI, NKID, DTAGV, and NKWD. The 85-residue stretch at 370–454 folds into the KH-like domain; the sequence is TRWPTSRLTQ…PIRIEFKGGE (85 aa). A disordered region spans residues 452–490; it reads GGENPYEGNKNTLTDRQVNKKRRMMSHHKKADKKRRDKR. The span at 470 to 490 shows a compositional bias: basic residues; it reads NKKRRMMSHHKKADKKRRDKR.

The protein belongs to the TRAFAC class TrmE-Era-EngA-EngB-Septin-like GTPase superfamily. EngA (Der) GTPase family. As to quaternary structure, associates with the 50S ribosomal subunit.

Its function is as follows. GTPase that plays an essential role in the late steps of ribosome biogenesis. The polypeptide is GTPase Der (Pseudomonas syringae pv. syringae (strain B728a)).